The chain runs to 140 residues: Large-conductance mechanosensitive channel (140 aa).

2 helical membrane passes run 11 to 31 and 82 to 102; these read FAMRGNVVDMAVGIIIGGAFG and GNFIQVTLDFIIIAFAVFLLV.

Belongs to the MscL family. In terms of assembly, homopentamer.

The protein localises to the cell inner membrane. In terms of biological role, channel that opens in response to stretch forces in the membrane lipid bilayer. May participate in the regulation of osmotic pressure changes within the cell. This is Large-conductance mechanosensitive channel from Parabacteroides distasonis (strain ATCC 8503 / DSM 20701 / CIP 104284 / JCM 5825 / NCTC 11152).